The sequence spans 229 residues: Large ribosomal subunit protein uL1 (229 aa).

This sequence belongs to the universal ribosomal protein uL1 family. Part of the 50S ribosomal subunit.

Binds directly to 23S rRNA. The L1 stalk is quite mobile in the ribosome, and is involved in E site tRNA release. Functionally, protein L1 is also a translational repressor protein, it controls the translation of the L11 operon by binding to its mRNA. This chain is Large ribosomal subunit protein uL1, found in Lactococcus lactis subsp. lactis (strain IL1403) (Streptococcus lactis).